The chain runs to 366 residues: Purple acid phosphatase 3 (366 aa).

Residues 1 to 32 (MTYIYRDTKITTKSTIPFLIFFLFCFSNLSMA) form the signal peptide. Fe cation is bound at residue Asp81. Asn89 is a glycosylation site (N-linked (GlcNAc...) asparagine). The Fe cation site is built by Asp114 and Tyr117. Residue Asp114 coordinates Zn(2+). 2 residues coordinate Zn(2+): Asn152 and His246. His255 functions as the Proton donor in the catalytic mechanism. A Zn(2+)-binding site is contributed by His281. 281–283 (HDH) is a substrate binding site. His283 contributes to the Fe cation binding site.

This sequence belongs to the metallophosphoesterase superfamily. Purple acid phosphatase family. As to quaternary structure, homodimer. It depends on Fe cation as a cofactor. Zn(2+) serves as cofactor. As to expression, expressed in stems, leaves, flowers and siliques.

It localises to the secreted. The catalysed reaction is a phosphate monoester + H2O = an alcohol + phosphate. The chain is Purple acid phosphatase 3 (PAP3) from Arabidopsis thaliana (Mouse-ear cress).